The following is a 279-amino-acid chain: ATP synthase gamma chain (279 aa).

Belongs to the ATPase gamma chain family. F-type ATPases have 2 components, CF(1) - the catalytic core - and CF(0) - the membrane proton channel. CF(1) has five subunits: alpha(3), beta(3), gamma(1), delta(1), epsilon(1). CF(0) has three main subunits: a, b and c.

The protein resides in the cell membrane. Its function is as follows. Produces ATP from ADP in the presence of a proton gradient across the membrane. The gamma chain is believed to be important in regulating ATPase activity and the flow of protons through the CF(0) complex. This Mycoplasmopsis pulmonis (strain UAB CTIP) (Mycoplasma pulmonis) protein is ATP synthase gamma chain.